Reading from the N-terminus, the 621-residue chain is MTLDISKYPTLALANTPEELRLLPKETLPTLCDELRTYLLNSVSQSSGHLASGLGTVELTVALHYVYNTPVDQLIWDVGHQAYPHKILTGRRDQMPTIRQKDGLHPFPWREESEYDTLSVGHSSTSISAGLGMAISAQKEGEGRKVVSVIGDGAITAGMAFEAMNHAGDVHPDMLVILNDNEMSISENVGALNNHLAKVLSGSLYTSIREGGKKVLSGVPPIKELVRRTEEHLKGMVVPGTLFEELGFNYIGPIDGHDVNELVKTLKNMRELKGPQFLHIMTKKGKGYEPAEKDPIGYHAVPKFAPSNNSLPKSSGGKPNFSKIFGDFLCDMAAQDPKLMAITPAMREGSGMVRFSKEYPEQYFDVAIAEQHAVTLATGMAIAGDHPIVAIYSTFLQRGYDQLIHDVAIMDLPVMFAIDRAGLVGADGQTHQGAFDLSFMRCIPNMVIMAPSDENECRQMLYTGHKHTGPSAVRYPRGSGMGTDIEKDFTALEIGKGRIVRKGEKVAILSFGTFLGNALEAAENLNATVADMRFVKPLDEALIRQLAAEHDVLVTLEENAIAGGAGAGVIEFMMQDKIIKPVLNLGLPDRFVPQGTQDELHEDLGLDAKGIEKSINDYLAK.

Thiamine diphosphate contacts are provided by residues His80 and 121–123; that span reads GHS. Asp152 contributes to the Mg(2+) binding site. Residues 153 to 154, Asn181, Tyr288, and Glu370 each bind thiamine diphosphate; that span reads GA. A Mg(2+)-binding site is contributed by Asn181.

This sequence belongs to the transketolase family. DXPS subfamily. As to quaternary structure, homodimer. It depends on Mg(2+) as a cofactor. Thiamine diphosphate is required as a cofactor.

The catalysed reaction is D-glyceraldehyde 3-phosphate + pyruvate + H(+) = 1-deoxy-D-xylulose 5-phosphate + CO2. The protein operates within metabolic intermediate biosynthesis; 1-deoxy-D-xylulose 5-phosphate biosynthesis; 1-deoxy-D-xylulose 5-phosphate from D-glyceraldehyde 3-phosphate and pyruvate: step 1/1. Its function is as follows. Catalyzes the acyloin condensation reaction between C atoms 2 and 3 of pyruvate and glyceraldehyde 3-phosphate to yield 1-deoxy-D-xylulose-5-phosphate (DXP). The sequence is that of 1-deoxy-D-xylulose-5-phosphate synthase from Vibrio campbellii (strain ATCC BAA-1116).